A 124-amino-acid polypeptide reads, in one-letter code: Fluoride-specific ion channel FluC (124 aa).

A run of 4 helical transmembrane segments spans residues 4–24 (VLLV…ISIF), 35–55 (FGTL…YALG), 60–80 (ISPE…TTFS), and 95–115 (WLKA…MVYL). G74 and T77 together coordinate Na(+).

The protein belongs to the fluoride channel Fluc/FEX (TC 1.A.43) family.

The protein localises to the cell inner membrane. The enzyme catalyses fluoride(in) = fluoride(out). Its activity is regulated as follows. Na(+) is not transported, but it plays an essential structural role and its presence is essential for fluoride channel function. Functionally, fluoride-specific ion channel. Important for reducing fluoride concentration in the cell, thus reducing its toxicity. This is Fluoride-specific ion channel FluC from Shewanella putrefaciens (strain CN-32 / ATCC BAA-453).